A 131-amino-acid chain; its full sequence is Small ribosomal subunit protein eS6 (131 aa).

It belongs to the eukaryotic ribosomal protein eS6 family.

In Halobacterium salinarum (strain ATCC 29341 / DSM 671 / R1), this protein is Small ribosomal subunit protein eS6.